We begin with the raw amino-acid sequence, 771 residues long: Polyribonucleotide nucleotidyltransferase (771 aa).

Mg(2+)-binding residues include aspartate 487 and aspartate 493. Residues proline 554 to isoleucine 613 enclose the KH domain. The region spanning glycine 623 to arginine 691 is the S1 motif domain. Residues glutamate 696–aspartate 771 are disordered. Residues glutamate 702–aspartate 771 are compositionally biased toward basic and acidic residues.

It belongs to the polyribonucleotide nucleotidyltransferase family. Requires Mg(2+) as cofactor.

It localises to the cytoplasm. It carries out the reaction RNA(n+1) + phosphate = RNA(n) + a ribonucleoside 5'-diphosphate. Its function is as follows. Involved in mRNA degradation. Catalyzes the phosphorolysis of single-stranded polyribonucleotides processively in the 3'- to 5'-direction. This chain is Polyribonucleotide nucleotidyltransferase, found in Sphingopyxis alaskensis (strain DSM 13593 / LMG 18877 / RB2256) (Sphingomonas alaskensis).